We begin with the raw amino-acid sequence, 295 residues long: ATP synthase gamma chain (295 aa).

The protein belongs to the ATPase gamma chain family. F-type ATPases have 2 components, CF(1) - the catalytic core - and CF(0) - the membrane proton channel. CF(1) has five subunits: alpha(3), beta(3), gamma(1), delta(1), epsilon(1). CF(0) has three main subunits: a, b and c.

The protein localises to the cell inner membrane. Produces ATP from ADP in the presence of a proton gradient across the membrane. The gamma chain is believed to be important in regulating ATPase activity and the flow of protons through the CF(0) complex. The protein is ATP synthase gamma chain of Maricaulis maris (strain MCS10) (Caulobacter maris).